The following is a 242-amino-acid chain: Dehydration-responsive element-binding protein 1J (242 aa).

Low complexity predominate over residues 20–29; that stretch reads SSATTAATAT. The tract at residues 20-44 is disordered; sequence SSATTAATATGPASPKRPAGRTKFQ. The segment at residues 50–109 is a DNA-binding region (AP2/ERF); the sequence is VFRGVRRRGRAGRWVCEVRVPGSRGDRLWVGTFDTAEEAARAHDAAMLALCGASASLNFA. Residues 143-184 form a disordered region; it reads FQRRGSTAATATATSGDAASTAPPSSSPVLSPNDDNASSAST. The segment covering 148–184 has biased composition (low complexity); the sequence is STAATATATSGDAASTAPPSSSPVLSPNDDNASSAST.

It belongs to the AP2/ERF transcription factor family. ERF subfamily.

The protein resides in the nucleus. Transcriptional activator that binds specifically to the DNA sequence 5'-[AG]CCGAC-3'. Binding to the C-repeat/DRE element mediates high salinity- and dehydration-inducible transcription. This Oryza sativa subsp. japonica (Rice) protein is Dehydration-responsive element-binding protein 1J (DREB1J).